A 339-amino-acid chain; its full sequence is Glyceraldehyde-3-phosphate dehydrogenase (339 aa).

NAD(+) is bound by residues 12-13 (RI), D35, and K84. D-glyceraldehyde 3-phosphate-binding positions include 155 to 157 (SCT), T186, 215 to 216 (TG), and R238. The Nucleophile role is filled by C156. N320 is a binding site for NAD(+).

Belongs to the glyceraldehyde-3-phosphate dehydrogenase family. Homotetramer.

The protein resides in the cytoplasm. The enzyme catalyses D-glyceraldehyde 3-phosphate + phosphate + NAD(+) = (2R)-3-phospho-glyceroyl phosphate + NADH + H(+). Its pathway is carbohydrate degradation; glycolysis; pyruvate from D-glyceraldehyde 3-phosphate: step 1/5. The sequence is that of Glyceraldehyde-3-phosphate dehydrogenase (GAPD) from Mastigamoeba balamuthi (Phreatamoeba balamuthi).